Consider the following 71-residue polypeptide: Permeability factor 2 (71 aa).

2 disulfide bridges follow: C7/C33 and C9/C49.

It belongs to the intercrine alpha (chemokine CxC) family. As to quaternary structure, homodimer.

The protein resides in the secreted. Has chemotactic activity for neutrophils. This is Permeability factor 2 from Oryctolagus cuniculus (Rabbit).